Reading from the N-terminus, the 490-residue chain is Aspartyl/glutamyl-tRNA(Asn/Gln) amidotransferase subunit B (490 aa).

This sequence belongs to the GatB/GatE family. GatB subfamily. Heterotrimer of A, B and C subunits.

The catalysed reaction is L-glutamyl-tRNA(Gln) + L-glutamine + ATP + H2O = L-glutaminyl-tRNA(Gln) + L-glutamate + ADP + phosphate + H(+). It carries out the reaction L-aspartyl-tRNA(Asn) + L-glutamine + ATP + H2O = L-asparaginyl-tRNA(Asn) + L-glutamate + ADP + phosphate + 2 H(+). In terms of biological role, allows the formation of correctly charged Asn-tRNA(Asn) or Gln-tRNA(Gln) through the transamidation of misacylated Asp-tRNA(Asn) or Glu-tRNA(Gln) in organisms which lack either or both of asparaginyl-tRNA or glutaminyl-tRNA synthetases. The reaction takes place in the presence of glutamine and ATP through an activated phospho-Asp-tRNA(Asn) or phospho-Glu-tRNA(Gln). The polypeptide is Aspartyl/glutamyl-tRNA(Asn/Gln) amidotransferase subunit B (Symbiobacterium thermophilum (strain DSM 24528 / JCM 14929 / IAM 14863 / T)).